The primary structure comprises 78 residues: Large ribosomal subunit protein bL28 (78 aa).

Residues 1–21 form a disordered region; the sequence is MSRVCQVTGKRPMSGNNRSHA.

This sequence belongs to the bacterial ribosomal protein bL28 family.

The sequence is that of Large ribosomal subunit protein bL28 from Photorhabdus laumondii subsp. laumondii (strain DSM 15139 / CIP 105565 / TT01) (Photorhabdus luminescens subsp. laumondii).